The following is a 472-amino-acid chain: uncharacterized protein (472 aa).

Helical transmembrane passes span 4 to 24, 27 to 47, 56 to 76, 99 to 119, 140 to 160, and 176 to 196; these read IIILLALGLLMFTAYRGFSVI, APICALFAVLLTDPSHVLPFF, AGFIKLYFPVFLLGAIFGKVV, ILAIVLMGAVLTYSGVSLFVV, LIPGTIALGAFTFTMDALPGT, and IYAAPWLGLMGAVIVLAAGML. Positions 209–229 are disordered; sequence GEGYGGFDSQNAPAPESIESA. The segment covering 220–229 has biased composition (low complexity); sequence APAPESIESA. Helical transmembrane passes span 240 to 260, 286 to 306, 323 to 343, 372 to 392, and 448 to 468; these read ALAFVPLILVGAVNKYFTIYL, AAAIWSVEIALVIGIITTILF, IGGALLASMNTGAEYGFGGII, TALAGITGSASGGMGIALSAM, and IFAITLIKTAAVFAVIAIYSL.

The protein belongs to the CitM (TC 2.A.11) transporter family.

It localises to the cell membrane. This is an uncharacterized protein from Bacillus subtilis (strain 168).